The primary structure comprises 652 residues: DNA ligase (652 aa).

Residues 29–33 (DSEYD), 78–79 (SL), and Glu-107 contribute to the NAD(+) site. The active-site N6-AMP-lysine intermediate is Lys-109. The NAD(+) site is built by Arg-130, Glu-164, Lys-278, and Lys-302. Zn(2+) is bound by residues Cys-395, Cys-398, Cys-413, and Cys-418. A BRCT domain is found at 577–652 (VADAALSGLT…VRDEAWLESL (76 aa)).

The protein belongs to the NAD-dependent DNA ligase family. LigA subfamily. Requires Mg(2+) as cofactor. Mn(2+) is required as a cofactor.

It carries out the reaction NAD(+) + (deoxyribonucleotide)n-3'-hydroxyl + 5'-phospho-(deoxyribonucleotide)m = (deoxyribonucleotide)n+m + AMP + beta-nicotinamide D-nucleotide.. Functionally, DNA ligase that catalyzes the formation of phosphodiester linkages between 5'-phosphoryl and 3'-hydroxyl groups in double-stranded DNA using NAD as a coenzyme and as the energy source for the reaction. It is essential for DNA replication and repair of damaged DNA. The polypeptide is DNA ligase (Streptococcus pneumoniae serotype 2 (strain D39 / NCTC 7466)).